Here is a 211-residue protein sequence, read N- to C-terminus: DELTA-stichotoxin-Hmg2a (211 aa).

Positions 1-19 are cleaved as a signal peptide; sequence MNRLIVLFLIVTMICATIA. The propeptide occupies 20-34; it reads VPSREELEDQKEYKR. The interval 37–46 is plays an important role in the hemolytic activity; sequence ALAGTIIEGA. An N-terminal region region spans residues 45 to 64; the sequence is GASLGFQILDKVLGELGKVS. The phosphocholine site is built by serine 88, valine 121, serine 139, proline 141, tyrosine 167, tyrosine 171, and tyrosine 172. The tract at residues 139–154 is trp-rich region, which is important for the binding to lipid membrane; that stretch reads SVPFDYNFYSNWWDVK. Residues 177–179 carry the Cell attachment site, crucial for protein stability motif; it reads RGD.

Belongs to the actinoporin family. Sea anemone subfamily. In terms of assembly, octamer or nonamer in membranes. Monomer in the soluble state.

The protein localises to the secreted. It is found in the nematocyst. The protein resides in the target cell membrane. Functionally, pore-forming protein that forms cations-selective hydrophilic pores of around 1 nm and causes cardiac stimulation and cytolysis. Pore formation is a multi-step process that involves specific recognition of membrane sphingomyelin (but neither cholesterol nor phosphatidylcholine) using aromatic rich region and adjacent phosphocholine (POC) binding site, firm binding to the membrane (mainly driven by hydrophobic interactions) accompanied by the transfer of the N-terminal region to the lipid-water interface and finally pore formation after oligomerization of monomers. The sequence is that of DELTA-stichotoxin-Hmg2a from Heteractis magnifica (Magnificent sea anemone).